Reading from the N-terminus, the 987-residue chain is SNF2 domain-containing protein ENL1 (987 aa).

Disordered stretches follow at residues 1 to 172 and 224 to 245; these read MASP…AYGG and FGDY…ENHA. Pro residues-rich tracts occupy residues 18 to 27 and 51 to 71; these read TPPAPTPLAA and NPNP…PQEP. Residues 99-110 are compositionally biased toward basic and acidic residues; it reads DSIRDILDDLTT. Positions 141–156 are enriched in polar residues; it reads PSQSQLNDGTKPSSSF. Positions 226 to 237 are enriched in acidic residues; it reads DYDDEDDIDQDA. Residues 292–466 form the Helicase ATP-binding domain; the sequence is WVLHCRGTGG…WALFYFCCPE (175 aa). 305-312 is a binding site for ATP; it reads DDMGLGKT. Residues 417 to 420 carry the DEAH box motif; sequence DEGH. The Helicase C-terminal domain maps to 645-801; sequence SLLQNLVSEG…TRYFSKRDIQ (157 aa).

The protein belongs to the SNF2/RAD54 helicase family. As to expression, expressed in ovaries, roots, shoots and leaves.

The protein resides in the cytoplasm. The protein localises to the chromosome. Its function is as follows. DNA helicase that acts as an essential component of the spindle assembly checkpoint. Plays an indispensable role in the development of seed endosperm. Is required to secure sister chromosome separation during endosperm syncytial mitosis, which involves extremely rapid free nuclear cycles. The chain is SNF2 domain-containing protein ENL1 from Oryza sativa subsp. japonica (Rice).